Here is a 111-residue protein sequence, read N- to C-terminus: DNA-binding protein MTH_1615 (111 aa).

Belongs to the PDCD5 family.

In terms of biological role, DNA-binding protein which can interact with a randomly chosen 20-mer of double-stranded DNA. The protein is DNA-binding protein MTH_1615 of Methanothermobacter thermautotrophicus (strain ATCC 29096 / DSM 1053 / JCM 10044 / NBRC 100330 / Delta H) (Methanobacterium thermoautotrophicum).